Consider the following 146-residue polypeptide: Aspartate 1-decarboxylase (146 aa).

Serine 25 serves as the catalytic Schiff-base intermediate with substrate; via pyruvic acid. The residue at position 25 (serine 25) is a Pyruvic acid (Ser). Position 57 (threonine 57) interacts with substrate. Tyrosine 58 functions as the Proton donor in the catalytic mechanism. 73 to 75 lines the substrate pocket; the sequence is GPA.

It belongs to the PanD family. Heterooctamer of four alpha and four beta subunits. Requires pyruvate as cofactor. In terms of processing, is synthesized initially as an inactive proenzyme, which is activated by self-cleavage at a specific serine bond to produce a beta-subunit with a hydroxyl group at its C-terminus and an alpha-subunit with a pyruvoyl group at its N-terminus.

Its subcellular location is the cytoplasm. The catalysed reaction is L-aspartate + H(+) = beta-alanine + CO2. The protein operates within cofactor biosynthesis; (R)-pantothenate biosynthesis; beta-alanine from L-aspartate: step 1/1. Catalyzes the pyruvoyl-dependent decarboxylation of aspartate to produce beta-alanine. In Salinibacter ruber (strain DSM 13855 / M31), this protein is Aspartate 1-decarboxylase.